A 221-amino-acid chain; its full sequence is Eukaryotic translation initiation factor 3 subunit K (221 aa).

One can recognise a PCI domain in the interval 46–215 (YDLEANLACL…EKIEFDNLAP (170 aa)).

The protein belongs to the eIF-3 subunit K family. In terms of assembly, component of the eukaryotic translation initiation factor 3 (eIF-3) complex.

It is found in the cytoplasm. Component of the eukaryotic translation initiation factor 3 (eIF-3) complex, which is involved in protein synthesis of a specialized repertoire of mRNAs and, together with other initiation factors, stimulates binding of mRNA and methionyl-tRNAi to the 40S ribosome. The eIF-3 complex specifically targets and initiates translation of a subset of mRNAs involved in cell proliferation. The polypeptide is Eukaryotic translation initiation factor 3 subunit K (Anopheles gambiae (African malaria mosquito)).